The sequence spans 689 residues: Glycine--tRNA ligase beta subunit (689 aa).

It belongs to the class-II aminoacyl-tRNA synthetase family. In terms of assembly, tetramer of two alpha and two beta subunits.

Its subcellular location is the cytoplasm. It carries out the reaction tRNA(Gly) + glycine + ATP = glycyl-tRNA(Gly) + AMP + diphosphate. This chain is Glycine--tRNA ligase beta subunit, found in Shewanella pealeana (strain ATCC 700345 / ANG-SQ1).